The chain runs to 355 residues: Eukaryotic initiation factor 4A-13 (355 aa).

Positions 40–68 match the Q motif motif; it reads DSFDAMGLQENLLRGIYAYGFEKPSAIQQ. In terms of domain architecture, Helicase ATP-binding spans 71 to 241; that stretch reads IVPFCKGLDV…RKFMNQPVRI (171 aa). An ATP-binding site is contributed by 84 to 91; that stretch reads AQSGTGKT. Positions 189-192 match the DEAD box motif; the sequence is DEAD. Residues 252-355 form the Helicase C-terminal domain; it reads GIKQFYVNVD…QQVSLVINYD (104 aa).

This sequence belongs to the DEAD box helicase family. eIF4A subfamily. In terms of assembly, eIF4F is a multi-subunit complex, the composition of which varies with external and internal environmental conditions. It is composed of at least EIF4A, EIF4E and EIF4G.

The enzyme catalyses ATP + H2O = ADP + phosphate + H(+). In terms of biological role, ATP-dependent RNA helicase which is a subunit of the eIF4F complex involved in cap recognition and is required for mRNA binding to ribosome. In the current model of translation initiation, eIF4A unwinds RNA secondary structures in the 5'-UTR of mRNAs which is necessary to allow efficient binding of the small ribosomal subunit, and subsequent scanning for the initiator codon. The protein is Eukaryotic initiation factor 4A-13 of Nicotiana tabacum (Common tobacco).